The sequence spans 404 residues: uncharacterized protein (404 aa).

Residues Val-262–Ala-278 are compositionally biased toward polar residues. Disordered stretches follow at residues Val-262–Leu-307 and Met-319–Asp-340. A phosphoserine mark is found at Ser-268, Ser-276, and Ser-279. Phosphothreonine is present on residues Thr-290 and Thr-293. A phosphoserine mark is found at Ser-304, Ser-306, Ser-324, Ser-358, and Ser-362. The span at Met-319–Asp-336 shows a compositional bias: basic and acidic residues.

This is an uncharacterized protein from Mus musculus (Mouse).